The sequence spans 217 residues: NADPH-dependent 3-demethoxyubiquinone 3-hydroxylase, mitochondrial (217 aa).

Repeat copies occupy residues 49-130 and 131-217. A 2 X approximate tandem repeats region spans residues 49 to 217; that stretch reads IIERIIRVDH…KTAIWLSTRV (169 aa). Position 52 (R52) interacts with NADH. Fe cation contacts are provided by E61, E91, H94, E143, E178, and H181. R216 serves as a coordination point for NADH.

It belongs to the COQ7 family. As to quaternary structure, component of a multi-subunit COQ enzyme complex. Requires Fe cation as cofactor.

The protein resides in the mitochondrion inner membrane. The catalysed reaction is a 5-methoxy-2-methyl-3-(all-trans-polyprenyl)benzoquinone + NADH + O2 = a 3-demethylubiquinone + NAD(+) + H2O. Its pathway is cofactor biosynthesis; ubiquinone biosynthesis. Functionally, catalyzes the hydroxylation of the 5-methoxy-2-methyl-3-(all-trans-polyprenyl)benzoquinone at the C6 position and participates in the biosynthesis of ubiquinone. Catalyzes the reaction through a substrate-mediated reduction pathway, whereby NADH shuttles electrons to 5-methoxy-2-methyl-3-(all-trans-decaprenyl)benzoquinone, which then transfers the electrons to the two Fe(3+) centers. The binding of 5-methoxy-2-methyl-3-(all-trans-polyprenyl)benzoquinone (DMQn) mediates reduction of the diiron center by nicotinamide adenine dinucleotide (NADH) and initiates oxygen activation for subsequent DMQ hydroxylation. Also has a structural role in the COQ enzyme complex, stabilizing other COQ polypeptides. The protein is NADPH-dependent 3-demethoxyubiquinone 3-hydroxylase, mitochondrial of Dictyostelium discoideum (Social amoeba).